The sequence spans 347 residues: D-alanine--D-alanine ligase (347 aa).

An ATP-grasp domain is found at 131–333; sequence KRVLESAGIA…YPELIERLVD (203 aa). 161 to 216 contributes to the ATP binding site; it reads EEKLAYPVFAKPSNMGSSVGISKSENQEELRQALKLAFRYDSRVLVEQGVNAREIE. Mg(2+) is bound by residues aspartate 287, glutamate 300, and asparagine 302.

It belongs to the D-alanine--D-alanine ligase family. It depends on Mg(2+) as a cofactor. Mn(2+) serves as cofactor.

Its subcellular location is the cytoplasm. The enzyme catalyses 2 D-alanine + ATP = D-alanyl-D-alanine + ADP + phosphate + H(+). It participates in cell wall biogenesis; peptidoglycan biosynthesis. Cell wall formation. This chain is D-alanine--D-alanine ligase, found in Streptococcus pneumoniae (strain P1031).